A 98-amino-acid chain; its full sequence is Plastocyanin (98 aa).

The Plastocyanin-like domain maps to 1–98 (DVTVKLGADS…AGMKGTITVQ (98 aa)). Residues H38, C83, H86, and M91 each coordinate Cu cation.

The protein belongs to the plastocyanin family. The cofactor is Cu(2+).

The protein localises to the plastid. Its subcellular location is the chloroplast thylakoid membrane. In terms of biological role, participates in electron transfer between P700 and the cytochrome b6-f complex in photosystem I. This Scenedesmus fuscus (Green alga) protein is Plastocyanin (petE).